We begin with the raw amino-acid sequence, 221 residues long: Probable septum site-determining protein MinC (221 aa).

The protein belongs to the MinC family. Interacts with MinD and FtsZ.

Cell division inhibitor that blocks the formation of polar Z ring septums. Rapidly oscillates between the poles of the cell to destabilize FtsZ filaments that have formed before they mature into polar Z rings. Prevents FtsZ polymerization. The chain is Probable septum site-determining protein MinC from Shewanella oneidensis (strain ATCC 700550 / JCM 31522 / CIP 106686 / LMG 19005 / NCIMB 14063 / MR-1).